The chain runs to 522 residues: GMP synthase [glutamine-hydrolyzing] (522 aa).

Positions 8–204 (RLLIIDFGSQ…FVRLAGFKGD (197 aa)) constitute a Glutamine amidotransferase type-1 domain. The active-site Nucleophile is Cys86. Residues His179 and Glu181 contribute to the active site. Residues 205-397 (WTMGAYREEA…LGLPASFIGR (193 aa)) enclose the GMPS ATP-PPase domain. 232–238 (SGGVDSS) contributes to the ATP binding site.

In terms of assembly, homodimer.

The enzyme catalyses XMP + L-glutamine + ATP + H2O = GMP + L-glutamate + AMP + diphosphate + 2 H(+). It functions in the pathway purine metabolism; GMP biosynthesis; GMP from XMP (L-Gln route): step 1/1. Functionally, catalyzes the synthesis of GMP from XMP. This chain is GMP synthase [glutamine-hydrolyzing], found in Roseobacter denitrificans (strain ATCC 33942 / OCh 114) (Erythrobacter sp. (strain OCh 114)).